The sequence spans 141 residues: Hemoglobin subunit alpha (141 aa).

The Globin domain occupies 1-141; it reads VLSPADKTNV…VSTVLTSKYR (141 aa). The residue at position 3 (Ser3) is a Phosphoserine. The residue at position 7 (Lys7) is an N6-succinyllysine. Thr8 is subject to Phosphothreonine. Lys11 is modified (N6-succinyllysine). An N6-acetyllysine; alternate modification is found at Lys16. Lys16 carries the post-translational modification N6-succinyllysine; alternate. Ser35 carries the phosphoserine modification. Residue Lys40 is modified to N6-succinyllysine. His58 lines the O2 pocket. His87 serves as a coordination point for heme b. At Ser102 the chain carries Phosphoserine. Residue Thr108 is modified to Phosphothreonine. Residues Ser124 and Ser131 each carry the phosphoserine modification. Phosphothreonine is present on residues Thr134 and Thr137. Phosphoserine is present on Ser138.

This sequence belongs to the globin family. Heterotetramer of two alpha chains and two beta chains. In terms of tissue distribution, red blood cells.

Involved in oxygen transport from the lung to the various peripheral tissues. In terms of biological role, hemopressin acts as an antagonist peptide of the cannabinoid receptor CNR1. Hemopressin-binding efficiently blocks cannabinoid receptor CNR1 and subsequent signaling. The polypeptide is Hemoglobin subunit alpha (HBA) (Physeter macrocephalus (Sperm whale)).